The sequence spans 1846 residues: MTRMNIVRCRRRHKILENLEEENLGPSCSSTTSTTAATEALGTTTEDMRLKQQRSSSRATEHDIVDGNHHDDEHITMRRLRLVKNSRTRRRTTPDSSMDCYEENPPSQKTSINYSWISKKSSMTSLMLLLLFAFVQPCASIVEKRCGPIDIRNRPWDIKPQWSKLGDPNEKDLAGQRMVNCTVVEGSLTISFVLKHKTKAQEEMHRSLQPRYSQDEFITFPHLREITGTLLVFETEGLVDLRKIFPNLRVIGGRSLIQHYALIIYRNPDLEIGLDKLSVIRNGGVRIIDNRKLCYTKTIDWKHLITSSINDVVVDNAAEYAVTETGLMCPRGACEEDKGESKCHYLEEKNQEQGVERVQSCWSNTTCQKSCAYDRLLPTKEIGPGCDANGDRCHDQCVGGCERVNDATACHACKNVYHKGKCIEKCDAHLYLLLQRRCVTREQCLQLNPVLSNKTVPIKATAGLCSDKCPDGYQINPDDHRECRKCVGKCEIVCEINHVIDTFPKAQAIRLCNIIDGNLTIEIRGKQDSGMASELKDIFANIHTITGYLLVRQSSPFISLNMFRNLRRIEAKSLFRNLYAITVFENPNLKKLFDSTTDLTLDRGTVSIANNKMLCFKYIKQLMSKLNIPLDPIDQSEGTNGEKAICEDMAINVSITAVNADSVFFSWPSFNITDIDQRKFLGYELFFKEVPRIDENMTIEEDRSACVDSWQSVFKQYYETSNGEPTPDIFMDIGPRERIRPNTLYAYYVATQMVLHAGAKNGVSKIGFVRTSYYTPDPPTLALAQVDSDAIHITWEAPLQPNGDLTHYTIMWRENEVSPYEEAEKFCTDASTPANRQHTKDPKETIVADKPVDIPSSRTVAPTLLTMMGHEDQQKTCAATPGCCSCSAIEESSEQNKKKRPDPMSAIESSAFENKLLDEVLMPRDTMRVRRSIEDANRVSEELEKAENLGKAPKTLGGKKPLIHISKKKPSSSSTTSTPAPTIASMYALTRKPTTVPGTRIRLYEIYEPLPGSWAINVSALALDNSYVIRNLKHYTLYAISLSACQNMTVPGASCSISHRAGALKRTKHITDIDKVLNETIEWRFMNNSQQVNVTWDPPTEVNGGIFGYVVKLKSKVDGSIVMTRCVGAKRGYSTRNQGVLFQNLADGRYFVSVTATSVHGAGPEAESSDPIVVMTPGFFTVEIILGMLLVFLILMSIAGCIIYYYIQVRYGKKVKALSDFMQLNPEYCVDNKYNADDWELRQDDVVLGQQCGEGSFGKVYLGTGNNVVSLMGDRFGPCAIKINVDDPASTENLNYLMEANIMKNFKTNFIVKLYGVISTVQPAMVVMEMMDLGNLRDYLRSKREDEVFNETDCNFFDIIPRDKFHEWAAQICDGMAYLESLKFCHRDLAARNCMINRDETVKIGDFGMARDLFYHDYYKPSGKRMMPVRWMSPESLKDGKFDSKSDVWSFGVVLYEMVTLGAQPYIGLSNDEVLNYIGMARKVIKKPECCENYWYKVMKMCWRYSPRDRPTFLQLVHLLAAEASPEFRDLSFVLTDNQMILDDSEALDLDDIDDTDMNDQVVEVAPDVENVEVQSDSERRNTDSIPLKQFKTIPPINATTSHSTISIDETPMKAKQREGSLDEEYALMNHSGGPSDAEVRTYAGDGDYVERDVRENDVPTRRNTGASTSSYTGGGPYCLTNRGGSNERGAGFGEAVRLTDGVGSGHLNDDDYVEKEISSMDTRRSTGASSSSYGVPQTNWSGNRGATYYTSKAQQAATAAAAAAAALQQQQNGGRGDRLTQLPGTGHLQSTRGGQDGDYIETEPKNYRNNGSPSRNGNSRDIFNGRSAFGENEHLIEDNEHHPLV.

3 N-linked (GlcNAc...) asparagine glycosylation sites follow: Asn113, Asn180, and Asn364. 5 disulfides stabilise this stretch: Cys371–Cys386, Cys393–Cys401, Cys397–Cys410, Cys413–Cys422, and Cys426–Cys438. Asn453 carries N-linked (GlcNAc...) asparagine glycosylation. 2 cysteine pairs are disulfide-bonded: Cys469–Cys483 and Cys486–Cys490. Residue Asn518 is glycosylated (N-linked (GlcNAc...) asparagine). A disulfide bridge links Cys615 with Cys646. 3 N-linked (GlcNAc...) asparagine glycosylation sites follow: Asn652, Asn671, and Asn696. Fibronectin type-III domains are found at residues 775–869 (TPDP…TMMG), 969–1067 (KPSS…LKRT), and 1077–1179 (LNET…TPGF). The segment at 944-980 (EKAENLGKAPKTLGGKKPLIHISKKKPSSSSTTSTPA) is disordered. Basic residues predominate over residues 961 to 970 (PLIHISKKKP). The Extracellular segment spans residues 970–1183 (PSSSSTTSTP…VMTPGFFTVE (214 aa)). Residues 971–980 (SSSSTTSTPA) are compositionally biased toward low complexity. N-linked (GlcNAc...) asparagine glycosylation is found at Asn1017, Asn1047, Asn1078, Asn1087, and Asn1093. A helical membrane pass occupies residues 1184-1204 (IILGMLLVFLILMSIAGCIIY). At 1205–1846 (YYIQVRYGKK…IEDNEHHPLV (642 aa)) the chain is on the cytoplasmic side. Residues 1246–1528 (VVLGQQCGEG…LLAAEASPEF (283 aa)) form the Protein kinase domain. Residues 1252 to 1260 (CGEGSFGKV) and Lys1282 contribute to the ATP site. Asp1388 functions as the Proton acceptor in the catalytic mechanism. Disordered regions lie at residues 1718-1742 (ISSM…TNWS) and 1769-1826 (QQQQ…IFNG). The segment covering 1726–1742 (STGASSSSYGVPQTNWS) has biased composition (polar residues). Low complexity predominate over residues 1808–1821 (YRNNGSPSRNGNSR).

Belongs to the protein kinase superfamily. Tyr protein kinase family. Insulin receptor subfamily. Tetramer of 2 alpha and 2 beta chains linked by disulfide bonds. The alpha chains contribute to the formation of the ligand-binding domain, while the beta chains carry the kinase domain. Interacts (via cytoplasmic domain) with shc-1 (PID domain). Interacts (via kinase domain) with daf-18 (via C-terminus). As to quaternary structure, interacts with casy-1; promoting axonal localization. Mg(2+) is required as a cofactor.

It is found in the membrane. The protein resides in the cell projection. It localises to the axon. It carries out the reaction L-tyrosyl-[protein] + ATP = O-phospho-L-tyrosyl-[protein] + ADP + H(+). Its activity is regulated as follows. Autophosphorylation activates the kinase activity. Interaction with shc-1 may inhibit its activity. Insulin receptor-like tyrosine kinase which regulates metabolism, controls longevity and prevents developmental arrest at the dauer stage. Binding of INS family members may either stimulate, or antagonize, association of the receptor with downstream mediators such as pdk-1 and age-1. Required for germline progenitor proliferation during larval development. Plays a role in maintaining gonad integrity in a daf-16/FOXO-dependent manner. Required for the response to environmental stimuli such as light, food, pheromone, and temperature. Negatively regulates resistance to UV and oxidative stress. In a daf-16/FOXO-dependent manner, plays a role in regulating the response to white light. Role in immune function and pathogen resistance. Negatively regulates autophagy. Regulates daf-18/PTEN protein levels. Plays a role in controlling seam cell development during the larval stages. In terms of biological role, required for taste avoidance learning in the cell body of ASER gustatory neurons. Its function is as follows. Required for taste avoidance learning in axons of ASER gustatory neurons. The chain is Insulin-like receptor from Caenorhabditis elegans.